We begin with the raw amino-acid sequence, 383 residues long: Putative [LysW]-aminoadipate semialdehyde/glutamate semialdehyde transaminase (383 aa).

Residues 97–98 (GT) and Phe-124 contribute to the pyridoxal 5'-phosphate site. Arg-127 serves as a coordination point for substrate. A pyridoxal 5'-phosphate-binding site is contributed by 209 to 212 (DEVQ). An N6-(pyridoxal phosphate)lysine modification is found at Lys-238. Substrate is bound at residue Ser-266. Residue Thr-267 coordinates pyridoxal 5'-phosphate.

Belongs to the class-III pyridoxal-phosphate-dependent aminotransferase family. LysJ subfamily. Homodimer. Pyridoxal 5'-phosphate serves as cofactor.

It is found in the cytoplasm. The catalysed reaction is [amino-group carrier protein]-C-terminal-gamma-(L-lysyl)-L-glutamate + 2-oxoglutarate = [amino-group carrier protein]-C-terminal-N-(1-carboxy-5-oxopentan-1-yl)-L-glutamine + L-glutamate. It catalyses the reaction [amino-group carrier protein]-C-terminal-gamma-(L-ornithyl)-L-glutamate + 2-oxoglutarate = [amino-group carrier protein]-C-terminal-gamma-(L-glutamyl-5-semialdehyde)-L-glutamate + L-glutamate. Its pathway is amino-acid biosynthesis; L-lysine biosynthesis via AAA pathway; L-lysine from L-alpha-aminoadipate (Thermus route): step 4/5. It participates in amino-acid biosynthesis; L-arginine biosynthesis. In terms of biological role, involved in both the arginine and lysine biosynthetic pathways. The polypeptide is Putative [LysW]-aminoadipate semialdehyde/glutamate semialdehyde transaminase (Pyrobaculum aerophilum (strain ATCC 51768 / DSM 7523 / JCM 9630 / CIP 104966 / NBRC 100827 / IM2)).